The sequence spans 362 residues: Dihydroorotate dehydrogenase (quinone) (362 aa).

FMN contacts are provided by residues 62 to 66 (AGYDK) and threonine 86. Residue lysine 66 participates in substrate binding. 111–115 (NRLGF) contacts substrate. Positions 139 and 170 each coordinate FMN. Asparagine 170 provides a ligand contact to substrate. The active-site Nucleophile is serine 173. Asparagine 175 contributes to the substrate binding site. The FMN site is built by lysine 215 and serine 243. Substrate is bound at residue 244 to 245 (NT). FMN is bound by residues glycine 266, glycine 295, and 316-317 (YS).

The protein belongs to the dihydroorotate dehydrogenase family. Type 2 subfamily. In terms of assembly, monomer. Requires FMN as cofactor.

It localises to the cell membrane. It catalyses the reaction (S)-dihydroorotate + a quinone = orotate + a quinol. The protein operates within pyrimidine metabolism; UMP biosynthesis via de novo pathway; orotate from (S)-dihydroorotate (quinone route): step 1/1. Its function is as follows. Catalyzes the conversion of dihydroorotate to orotate with quinone as electron acceptor. This Sinorhizobium fredii (strain NBRC 101917 / NGR234) protein is Dihydroorotate dehydrogenase (quinone).